Reading from the N-terminus, the 475-residue chain is Ribulose bisphosphate carboxylase large chain (475 aa).

Positions 1–2 (MS) are excised as a propeptide. N-acetylproline is present on Pro-3. N6,N6,N6-trimethyllysine is present on Lys-14. Substrate contacts are provided by Asn-123 and Thr-173. Lys-175 functions as the Proton acceptor in the catalytic mechanism. A substrate-binding site is contributed by Lys-177. Residues Lys-201, Asp-203, and Glu-204 each contribute to the Mg(2+) site. Lys-201 is modified (N6-carboxylysine). Residue His-294 is the Proton acceptor of the active site. Substrate contacts are provided by Arg-295, His-327, and Ser-379.

Belongs to the RuBisCO large chain family. Type I subfamily. Heterohexadecamer of 8 large chains and 8 small chains; disulfide-linked. The disulfide link is formed within the large subunit homodimers. The cofactor is Mg(2+). Post-translationally, the disulfide bond which can form in the large chain dimeric partners within the hexadecamer appears to be associated with oxidative stress and protein turnover.

It is found in the plastid. Its subcellular location is the chloroplast. It carries out the reaction 2 (2R)-3-phosphoglycerate + 2 H(+) = D-ribulose 1,5-bisphosphate + CO2 + H2O. The enzyme catalyses D-ribulose 1,5-bisphosphate + O2 = 2-phosphoglycolate + (2R)-3-phosphoglycerate + 2 H(+). Its function is as follows. RuBisCO catalyzes two reactions: the carboxylation of D-ribulose 1,5-bisphosphate, the primary event in carbon dioxide fixation, as well as the oxidative fragmentation of the pentose substrate in the photorespiration process. Both reactions occur simultaneously and in competition at the same active site. This chain is Ribulose bisphosphate carboxylase large chain, found in Citrus sinensis (Sweet orange).